We begin with the raw amino-acid sequence, 179 residues long: Interleukin-22b (179 aa).

A signal peptide spans 1 to 33 (MAVLQKSMSFSLMGTLAASCLLLIALWAQEANA). 2 disulfides stabilise this stretch: Cys-40-Cys-132 and Cys-89-Cys-178. Residues Asn-54, Asn-68, and Asn-97 are each glycosylated (N-linked (GlcNAc...) asparagine).

This sequence belongs to the IL-10 family.

The protein localises to the secreted. Its function is as follows. Cytokine that contributes to the inflammatory response in vivo. The sequence is that of Interleukin-22b from Mus musculus (Mouse).